We begin with the raw amino-acid sequence, 79 residues long: Short neurotoxin 8 (79 aa).

The N-terminal stretch at 1 to 21 (MKTLLLTLVMVTIMCLDLGYT) is a signal peptide. Cystine bridges form between cysteine 24–cysteine 41, cysteine 34–cysteine 59, cysteine 63–cysteine 71, and cysteine 72–cysteine 77.

The protein belongs to the three-finger toxin family. Short-chain subfamily. Type III alpha-neurotoxin sub-subfamily. As to expression, expressed by the venom gland.

The protein resides in the secreted. Binds with high affinity to muscle nicotinic acetylcholine receptor (nAChR) and hinders acetylcholine binding to the receptor, thereby impairing neuromuscular transmission. Causes muscle paralysis, spasms and increased respiration. The sequence is that of Short neurotoxin 8 from Pseudonaja textilis (Eastern brown snake).